A 155-amino-acid polypeptide reads, in one-letter code: FHA domain-containing protein FhaB (155 aa).

The chain crosses the membrane as a helical span at residues 6–28 (LQLTRAGFLMLLWVFIWSVLRIL). Threonine 36 is subject to Phosphothreonine. The FHA domain occupies 83-132 (VLIGRADDSTLVLTDDYASTRHARLSMRGSEWYVEDLGSTNGTYLDRAKV).

In terms of processing, phosphorylated by PknB. Dephosphorylated by PstP.

It localises to the cell membrane. The polypeptide is FHA domain-containing protein FhaB (fhaB) (Mycobacterium tuberculosis (strain CDC 1551 / Oshkosh)).